The sequence spans 238 residues: IkB-like protein (238 aa).

ANK repeat units follow at residues Asn-47–Glu-76, Asp-86–Leu-119, Asn-123–Gln-152, and Arg-157–Tyr-186. The Nuclear localization signal motif lies at Pro-80 to Asp-86. A Nuclear localization signal motif is present at residues Lys-202–Lys-213. The PxIxITxC motif; Interaction with host PPP3CA signature appears at Pro-205–Cys-212. The FLCV motif signature appears at Phe-227–Val-230.

It belongs to the asfivirus A238L family. In terms of assembly, interacts with host PPIA. Interacts with host PPP3CA/Calcineurin. Interacts with host RELA/p65; interaction of the 32 kDa form with host RELA results in the formation of a stable complex with NF-kappa-B. Interacts with host PPP3R1. Interacts with host EP300; this interaction inhibits the association of host EP300 with host RELA, JUN and NFATC2. The protein exists in a 28 kDa and a 32 kDa form, probably due to post-translational modifications which are neither phosphorylation, nor sumoylation.

It localises to the host nucleus. Its subcellular location is the host cytoplasm. Its function is as follows. IkB-like protein that inhibits the binding of NF-kappa-B to DNA, thereby downregulating pro-inflammatory cytokine production. Forms a heterodimer with the NF-kappa-B subunit RELA/p65 and prevents the activation of the NF-kappa-B transcription factor. Inhibits calcineurin function, which is required for the induction of nuclear factor of activated T cells (NFAT)-dependent immune response genes. Prevents the binding of substrates to calcineurin without affecting the phosphatase activity. Does not contain the serine residues that are phosphorylated by host IkB kinase and thus is not degraded following stimulation of the NFkB pathway. This African swine fever virus (isolate Warthog/Namibia/Wart80/1980) (ASFV) protein is IkB-like protein (A238L).